A 481-amino-acid polypeptide reads, in one-letter code: Cis-aconitate decarboxylase (481 aa).

A disordered region spans residues 462–481; sequence SPPEVASNSPACNNSITNLS. Positions 467-481 are enriched in polar residues; sequence ASNSPACNNSITNLS.

This sequence belongs to the PrpD family. In terms of assembly, homodimer. As to expression, expressed in LPS-tolerized macrophages (at protein level). Expressed in peripheral blood mononuclear cells (PBMCs), microglia and macrophage cells.

The protein localises to the mitochondrion. It catalyses the reaction cis-aconitate + H(+) = itaconate + CO2. Functionally, cis-aconitate decarboxylase that catalyzes production of itaconate and is involved in the inhibition of the inflammatory response. Acts as a negative regulator of the Toll-like receptors (TLRs)-mediated inflammatory innate response by stimulating the tumor necrosis factor alpha-induced protein TNFAIP3 expression via reactive oxygen species (ROS) in LPS-tolerized macrophages. Involved in antimicrobial response of innate immune cells; ACOD1-mediated itaconic acid production contributes to the antimicrobial activity of macrophages by generating itaconate, leading to alkylation of proteins, such as TFEB. Involved in antiviral response following infection by flavivirus in neurons: ACOD1-mediated itaconate production inhibits the activity of succinate dehydrogenase, generating a metabolic state in neurons that suppresses replication of viral genomes. Plays a role in the embryo implantation. In Homo sapiens (Human), this protein is Cis-aconitate decarboxylase.